A 646-amino-acid chain; its full sequence is Lipoteichoic acid synthase (646 aa).

Residues 1 to 7 (MSLPKKK) lie on the Cytoplasmic side of the membrane. Residues 8–28 (IGIFAFFLLTVFTITLKTYFS) form a helical membrane-spanning segment. Residues 29–43 (YYVDFSLGVKGLVQN) are Extracellular-facing. Residues 44–64 (LILIMNPYSLIALVLSVFLFF) traverse the membrane as a helical segment. The Cytoplasmic segment spans residues 65–68 (KGKK). The helical transmembrane segment at 69 to 89 (AFWFIFIGGFLLTFLLYANVV) threads the bilayer. Residues 90-119 (YFRFFSDFLTFSTLNQAGNVESMGGAVSAS) are Extracellular-facing. A helical transmembrane segment spans residues 120–140 (FKWYDFVYFIDTIIYLAILIF). At 141-153 (KRKWLDNRAFSKK) the chain is on the cytoplasmic side. Residues 154-174 (FVPVVMATSVALFFLNLAFAE) traverse the membrane as a helical segment. Over 175 to 646 (TDRPELLTRT…KSGPKGNEKK (472 aa)) the chain is Extracellular. Residues Glu-255 and Thr-300 each coordinate Mn(2+). Thr-300 is an active-site residue. His-416 provides a ligand contact to substrate. Residues Asp-475 and His-476 each coordinate Mn(2+).

This sequence belongs to the LTA synthase family. In terms of processing, proteolytically cleaved.

Its subcellular location is the cell membrane. The protein localises to the secreted. Its pathway is cell wall biogenesis; lipoteichoic acid biosynthesis. Its function is as follows. Catalyzes the polymerization of lipoteichoic acid (LTA) polyglycerol phosphate, a reaction that presumably uses phosphatidylglycerol (PG) as substrate. Is required for staphylococcal growth and cell division process. This chain is Lipoteichoic acid synthase (ltaS), found in Staphylococcus epidermidis (strain ATCC 12228 / FDA PCI 1200).